Reading from the N-terminus, the 52-residue chain is Conotoxin Cal9.2b (52 aa).

The propeptide occupies 1 to 6 (KKGVTL). 3 cysteine pairs are disulfide-bonded: Cys-14/Cys-31, Cys-19/Cys-41, and Cys-21/Cys-46.

As to expression, expressed by the venom duct.

It localises to the secreted. Functionally, probable neurotoxin with unknown target. Possibly targets ion channels. This is Conotoxin Cal9.2b from Californiconus californicus (California cone).